The primary structure comprises 671 residues: MQPDMSLNVIKMKSSDFLESAELDSGGFGKVSLCFHRTQGLMIMKTVYKGPNCIEHNEALLEEAKMMNRLRHSRVVKLLGVIIEEGKYSLVMEYMEKGNLMHVLKAEMSTPLSVKGRIILEIIEGMCYLHGKGVIHKDLKPENILVDNDFHIKIADLGLASFKMWSKLNNEEHNELREVDGTAKKNGGTLYYMAPEHLNDVNAKPTEKSDVYSFAVVLWAIFANKEPYENAICEQQLIMCIKSGNRPDVDDITEYCPREIISLMKLCWEANPEARPTFPGIEEKFRPFYLSQLEESVEEDVKSLKKEYSNENAVVKRMQSLQLDCVAVPSSRSNSATEQPGSLHSSQGLGMGPVEESWFAPSLEHPQEENEPSLQSKLQDEANYHLYGSRMDRQTKQQPRQNVAYNREEERRRRVSHDPFAQQRPYENFQNTEGKGTAYSSAASHGNAVHQPSGLTSQPQVLYQNNGLYSSHGFGTRPLDPGTAGPRVWYRPIPSHMPSLHNIPVPETNYLGNTPTMPFSSLPPTDESIKYTIYNSTGIQIGAYNYMEIGGTSSSLLDSTNTNFKEEPAAKYQAIFDNTTSLTDKHLDPIRENLGKHWKNCARKLGFTQSQIDEIDHDYERDGLKEKVYQMLQKWVMREGIKGATVGKLAQALHQCSRIDLLSSLIYVSQN.

S6 carries the post-translational modification Phosphoserine; by IKKA and IKKB. One can recognise a Protein kinase domain in the interval 17 to 289 (FLESAELDSG…GIEEKFRPFY (273 aa)). S20 carries the post-translational modification Phosphoserine; by autocatalysis. Residues 23–31 (LDSGGFGKV) and K45 contribute to the ATP site. Position 25 is a phosphoserine; by IKKA and IKKB (S25). The Proton acceptor role is filled by D138. A Phosphoserine; by RIPK3 and autocatalysis modification is found at S161. S166 carries the post-translational modification Phosphoserine; by autocatalysis. Residues 290–582 (LSQLEESVEE…QAIFDNTTSL (293 aa)) are interaction with SQSTM1. Residue S303 is modified to Phosphoserine. Phosphoserine; by MAP3K7 occurs at positions 320, 331, and 333. Positions 331–348 (SRSNSATEQPGSLHSSQG) are enriched in polar residues. The segment at 331 to 354 (SRSNSATEQPGSLHSSQGLGMGPV) is disordered. Residue K377 forms a Glycyl lysine isopeptide (Lys-Gly) (interchain with G-Cter in ubiquitin) linkage. Y384 carries the phosphotyrosine modification. The interval 389 to 455 (SRMDRQTKQQ…GNAVHQPSGL (67 aa)) is disordered. The segment covering 428–444 (NFQNTEGKGTAYSSAAS) has biased composition (polar residues). Residues 531-547 (YTIYNSTGIQIGAYNYM) carry the RIP homotypic interaction motif (RHIM) motif. The region spanning 583 to 669 (TDKHLDPIRE…DLLSSLIYVS (87 aa)) is the Death domain. R603 carries a (Microbial infection) N-beta-linked (GlcNAc) arginine glycan.

It belongs to the protein kinase superfamily. TKL Ser/Thr protein kinase family. As to quaternary structure, homodimer. Interacts (via RIP homotypic interaction motif) with RIPK3 (via RIP homotypic interaction motif); this interaction induces RIPK1 phosphorylation and formation of a RIPK1-RIPK3 necroptosis-inducing complex. Upon TNF-induced necrosis, the RIPK1-RIPK3 dimer further interacts with PGAM5 and MLKL; the formation of this complex leads to PGAM5 phosphorylation and increase in PGAM5 phosphatase activity. Interacts (via the death domain) with TNFRSF6 (via the death domain) and TRADD (via the death domain). Is recruited by TRADD to TNFRSF1A in a TNF-dependent process. Binds RNF216, EGFR, IKBKG, TRAF1, TRAF2 and TRAF3. Interacts with BNLF1. Interacts with SQSTM1 upon TNF-alpha stimulation. May interact with MAVS/IPS1. Interacts with ZFAND5. Interacts with RBCK1. Interacts with ZBP1. Interacts with BIRC2/c-IAP1, BIRC3/c-IAP2 and XIAP/BIRC4. Interacts (via kinase domain) with DAB2IP (via Ras-GAP domain); the interaction occurs in a TNF-alpha-dependent manner. Interacts with ARHGEF2. Interacts (via protein kinase domain) with RFFL; involved in RIPK1 ubiquitination. Interacts with RNF34; involved in RIPK1 ubiquitination. Interacts with TICAM1 and this interaction is enhanced in the presence of WDFY1. Interacts with PELI1. Interacts (via death domain) with CRADD (via death domain); the interaction is direct. Component of complex IIa composed of at least RIPK1, FADD and CASP8. Component of the AIM2 PANoptosome complex, a multiprotein complex that drives inflammatory cell death (PANoptosis). Interacts with MAP3K7, CFLAR, CASP8, FADD and NEMO. Interacts with TAX1BP1; this interaction negatively regulates RIPK1 ubiquitination. Interacts with GRB2. Interacts with DDX24; this interaction disrupts RLR signaling activation of IFN-dependent transcription factor IRF7. In terms of assembly, (Microbial infection) Interacts with mumps virus protein SH; this interaction inhibits downstream NF-kappa-B pathway activation. (Microbial infection) Interacts with Murid herpesvirus 1 protein RIR1. As to quaternary structure, (Microbial infection) Interacts (via RIP homotypic interaction motif) with herpes simplex virus 1/HHV-1 protein RIR1/ICP6 (via RIP homotypic interaction motif); this interaction prevents necroptosis activation. In terms of assembly, (Microbial infection) Interacts (via RIP homotypic interaction motif) with herpes simplex virus 2/HHV-2 protein RIR1/ICP10 (via RIP homotypic interaction motif); this interaction prevents necroptosis activation. (Microbial infection) Proteolytically cleaved by S.flexneri OspD3 within the RIP homotypic interaction motif (RHIM), leading to its degradation and inhibition of necroptosis. In terms of processing, proteolytically cleaved by CASP8 at Asp-324. Cleavage is crucial for limiting TNF-induced apoptosis, necroptosis and inflammatory response. Cleavage abolishes NF-kappa-B activation and enhances the interaction of TRADD with FADD. Proteolytically cleaved by CASP6 during intrinsic apoptosis. Post-translationally, RIPK1 and RIPK3 undergo reciprocal auto- and trans-phosphorylation. Phosphorylation of Ser-161 by RIPK3 is necessary for the formation of the necroptosis-inducing complex. Phosphorylation at Ser-25 represses its kinase activity and consequently prevents TNF-mediated RIPK1-dependent cell death. Phosphorylated at Ser-320 by MAP3K7 which requires prior ubiquitination with 'Lys-63'-linked chains by BIRC2/c-IAP1 and BIRC3/c-IAP2. This phosphorylation positively regulates RIPK1 interaction with RIPK3 to promote necroptosis but negatively regulates RIPK1 kinase activity and its interaction with FADD to mediate apoptosis. Deubiquitinated by USP7; this modification is required for TNF-alpha-induced apoptosis. In terms of processing, ubiquitinated with 'Lys-11'-, 'Lys-48'-, 'Lys-63'- and linear-linked type ubiquitin. Polyubiquitination with 'Lys-63'-linked chains by TRAF2 induces association with the IKK complex. Deubiquitination of 'Lys-63'-linked chains and polyubiquitination with 'Lys-48'-linked chains by TNFAIP3 leads to RIPK1 proteasomal degradation and consequently down-regulates TNF-alpha-induced NF-kappa-B signaling. 'Lys-48'-linked polyubiquitination by RFFL or RNF34 also promotes proteasomal degradation and negatively regulates TNF-alpha-induced NF-kappa-B signaling. Linear polyubiquitinated; the head-to-tail linear polyubiquitination ('Met-1'-linked) is mediated by the LUBAC complex and decreases protein kinase activity. Deubiquitination of linear polyubiquitin by CYLD promotes the kinase activity. Polyubiquitinated with 'Lys-48' and 'Lys-63'-linked chains by BIRC2/c-IAP1 and BIRC3/c-IAP2, leading to activation of NF-kappa-B. Ubiquitinated with 'Lys-63'-linked chains by PELI1. Ubiquitination at Lys-377 with 'Lys-63'-linked chains by BIRC2/c-IAP1 and BIRC3/c-IAP2 is essential for its phosphorylation at Ser-320 mediated by MAP3K7. This ubiquitination is required for NF-kB activation, suppresses RIPK1 kinase activity and plays a critical role in preventing cell death during embryonic development. Post-translationally, (Microbial infection) Glycosylated at Arg-603 by enteropathogenic E.coli protein NleB1: arginine GlcNAcylation prevents homotypic/heterotypic death domain interactions.

The protein localises to the cytoplasm. Its subcellular location is the cell membrane. The catalysed reaction is L-seryl-[protein] + ATP = O-phospho-L-seryl-[protein] + ADP + H(+). It catalyses the reaction L-threonyl-[protein] + ATP = O-phospho-L-threonyl-[protein] + ADP + H(+). Its activity is regulated as follows. Serine-threonine kinase activity is inhibited by linear polyubiquitination ('Met-1'-linked) by the LUBAC complex. Inhibited by necrostatins, including necrostatin-1, necrostatin-3 and necrostatin-4. Serine-threonine kinase which is a key regulator of TNF-mediated apoptosis, necroptosis and inflammatory pathways. Exhibits kinase activity-dependent functions that regulate cell death and kinase-independent scaffold functions regulating inflammatory signaling and cell survival. Has kinase-independent scaffold functions: upon binding of TNF to TNFR1, RIPK1 is recruited to the TNF-R1 signaling complex (TNF-RSC also known as complex I) where it acts as a scaffold protein promoting cell survival, in part, by activating the canonical NF-kappa-B pathway. Kinase activity is essential to regulate necroptosis and apoptosis, two parallel forms of cell death: upon activation of its protein kinase activity, regulates assembly of two death-inducing complexes, namely complex IIa (RIPK1-FADD-CASP8), which drives apoptosis, and the complex IIb (RIPK1-RIPK3-MLKL), which drives necroptosis. RIPK1 is required to limit CASP8-dependent TNFR1-induced apoptosis. In normal conditions, RIPK1 acts as an inhibitor of RIPK3-dependent necroptosis, a process mediated by RIPK3 component of complex IIb, which catalyzes phosphorylation of MLKL upon induction by ZBP1. Inhibits RIPK3-mediated necroptosis via FADD-mediated recruitment of CASP8, which cleaves RIPK1 and limits TNF-induced necroptosis. Required to inhibit apoptosis and necroptosis during embryonic development: acts by preventing the interaction of TRADD with FADD thereby limiting aberrant activation of CASP8. In addition to apoptosis and necroptosis, also involved in inflammatory response by promoting transcriptional production of pro-inflammatory cytokines, such as interleukin-6 (IL6). Phosphorylates RIPK3: RIPK1 and RIPK3 undergo reciprocal auto- and trans-phosphorylation. Phosphorylates DAB2IP at 'Ser-728' in a TNF-alpha-dependent manner, and thereby activates the MAP3K5-JNK apoptotic cascade. Required for ZBP1-induced NF-kappa-B activation in response to DNA damage. The polypeptide is Receptor-interacting serine/threonine-protein kinase 1 (Homo sapiens (Human)).